We begin with the raw amino-acid sequence, 99 residues long: U1-theraphotoxin-Lsp1a (99 aa).

Residues 1 to 23 (MRSLTLAALLLCSLLLVFHTSAA) form the signal peptide. The propeptide occupies 24 to 50 (AELEAQEGHLMIPGDTDTALETVDDER). Intrachain disulfides connect Cys54–Cys67, Cys58–Cys91, Cys72–Cys74, and Cys85–Cys96.

This sequence belongs to the neurotoxin 12 (Hwtx-2) family. 04 (lasiotoxin) subfamily. In terms of tissue distribution, expressed by the venom gland.

The protein resides in the secreted. Toxin that causes irreversible contractile paralysis into adult Aedes aegypti resulting in 100% mortality after 24 hours. The protein is U1-theraphotoxin-Lsp1a of Lasiodora sp. (strain IBSP 8539) (Brazilian salmon pink birdeater).